The sequence spans 272 residues: MGIRRCKPTSAGRRFVTYHDFSEITKDEPYKPLTTCIKKRKGRNNQGRITSWLKGGGNRKLYRIIDFKRNKHGIPAKIESIQYDPNRSARIALLKYMDGEYRYILAPDGLKVGDTIMSGSGIDIKVGNALPLKEIPLGTMIHNIELFPNGGGKLVRSAGTAAQLMAKEGKYAHVKLPSGEVRLINVNCFATIGQVSNLEHENVIIGKAGRTRHMGRRPSVRGVAMNPIDHPLGGGEGKSSGGRAACTPWGKPEGVKTRKNKRTDKFIIKRRK.

A disordered region spans residues 222–272 (GVAMNPIDHPLGGGEGKSSGGRAACTPWGKPEGVKTRKNKRTDKFIIKRRK). Residues 263 to 272 (TDKFIIKRRK) are compositionally biased toward basic and acidic residues.

It belongs to the universal ribosomal protein uL2 family. Part of the 50S ribosomal subunit. Forms a bridge to the 30S subunit in the 70S ribosome.

In terms of biological role, one of the primary rRNA binding proteins. Required for association of the 30S and 50S subunits to form the 70S ribosome, for tRNA binding and peptide bond formation. It has been suggested to have peptidyltransferase activity; this is somewhat controversial. Makes several contacts with the 16S rRNA in the 70S ribosome. The polypeptide is Large ribosomal subunit protein uL2 (Thermodesulfovibrio yellowstonii (strain ATCC 51303 / DSM 11347 / YP87)).